A 307-amino-acid chain; its full sequence is Heparan sulfate glucosamine 3-O-sulfotransferase 1 (307 aa).

An N-terminal signal peptide occupies residues 1–20; the sequence is MAALLLGAVLLVAQPQLVPS. Asparagine 48 carries an N-linked (GlcNAc...) asparagine glycan. Residues 64-68, arginine 147, and serine 155 each bind 3'-phosphoadenylyl sulfate; that span reads KGGTR. 3 N-linked (GlcNAc...) asparagine glycosylation sites follow: asparagine 192, asparagine 242, and asparagine 249. Tyrosine 255 is a binding site for 3'-phosphoadenylyl sulfate. Cysteine 256 and cysteine 265 are joined by a disulfide. 270–274 contacts 3'-phosphoadenylyl sulfate; the sequence is KGRAH.

This sequence belongs to the sulfotransferase 1 family. In terms of tissue distribution, highly expressed in the brain and kidney and weakly expressed in the heart, lung and placenta.

It is found in the golgi apparatus lumen. It carries out the reaction alpha-D-glucosaminyl-[heparan sulfate](n) + 3'-phosphoadenylyl sulfate = 3-sulfo-alpha-D-glucosaminyl-[heparan sulfate](n) + adenosine 3',5'-bisphosphate + H(+). In terms of biological role, sulfotransferase that utilizes 3'-phospho-5'-adenylyl sulfate (PAPS) to catalyze the transfer of a sulfo group to position 3 of glucosamine residues in heparan. Catalyzes the rate limiting step in the biosynthesis of heparan sulfate (HSact). This modification is a crucial step in the biosynthesis of anticoagulant heparan sulfate as it completes the structure of the antithrombin pentasaccharide binding site. This is Heparan sulfate glucosamine 3-O-sulfotransferase 1 (HS3ST1) from Homo sapiens (Human).